Reading from the N-terminus, the 478-residue chain is Zinc metalloproteinase/disintegrin (478 aa).

The first 20 residues, 1–20, serve as a signal peptide directing secretion; that stretch reads MIQVLLVTICLAAFPYQGSS. The propeptide occupies 21–187; sequence IILESGNVND…PIKKASHLNL (167 aa). Positions 193–389 constitute a Peptidase M12B domain; sequence RYVEIVIVVD…QKPQCILKKP (197 aa). 3 disulfide bridges follow: cysteine 304–cysteine 384, cysteine 344–cysteine 368, and cysteine 346–cysteine 351. Zn(2+) is bound at residue histidine 329. Residue glutamate 330 is part of the active site. Zn(2+) is bound by residues histidine 333 and histidine 339. Residues 390–408 constitute a propeptide that is removed on maturation; it reads LRTDTVSTPVSGNELLEAR. The Disintegrin domain maps to 397 to 478; sequence TPVSGNELLE…ADCPRNVLYG (82 aa). Disulfide bonds link cysteine 411–cysteine 420, cysteine 413–cysteine 421, cysteine 426–cysteine 440, cysteine 434–cysteine 464, cysteine 439–cysteine 443, and cysteine 452–cysteine 471. Residues 474-478 constitute a propeptide that is removed on maturation; it reads NVLYG.

It belongs to the venom metalloproteinase (M12B) family. P-II subfamily. P-IIa sub-subfamily. The cofactor is Zn(2+). Expressed by the venom gland.

The protein resides in the secreted. In terms of biological role, snake venom zinc metalloproteinase that causes hemorrhage by provoking the degradation of the sub-endothelial matrix proteins (fibronectin, laminin, type IV collagen, nidogen, and gelatins). Functionally, displays low cytotoxicity. In vitro, inhibits cancer cell migration (human breast cancer cell line MDA-MB-231) with a significant rate after 24 hours of incubation. This Crotalus durissus collilineatus (Brazilian rattlesnake) protein is Zinc metalloproteinase/disintegrin (MPII).